The following is a 91-amino-acid chain: Early E3B 10.4 kDa protein (91 aa).

Residues 1–21 (MVTVLLIFLCLPVIFSSSTFA) form the signal peptide. Over 22–33 (AVSDLDPECLAP) the chain is Lumenal. The helical transmembrane segment at 34-56 (FAVYLIFTFVTATCVCSIITLLI) threads the bilayer. The Cytoplasmic portion of the chain corresponds to 57–91 (TSLQFFDYYYVRIVYRRHHPRYQNPQIAALLQLQP).

The protein belongs to the adenoviridae E3B family.

The protein resides in the host endoplasmic reticulum membrane. Down-regulates the EGF receptor. The sequence is that of Early E3B 10.4 kDa protein from Homo sapiens (Human).